Reading from the N-terminus, the 336-residue chain is UDP-3-O-acylglucosamine N-acyltransferase (336 aa).

The active-site Proton acceptor is the H233.

The protein belongs to the transferase hexapeptide repeat family. LpxD subfamily. Homotrimer.

The enzyme catalyses a UDP-3-O-[(3R)-3-hydroxyacyl]-alpha-D-glucosamine + a (3R)-hydroxyacyl-[ACP] = a UDP-2-N,3-O-bis[(3R)-3-hydroxyacyl]-alpha-D-glucosamine + holo-[ACP] + H(+). It functions in the pathway bacterial outer membrane biogenesis; LPS lipid A biosynthesis. Its function is as follows. Catalyzes the N-acylation of UDP-3-O-acylglucosamine using 3-hydroxyacyl-ACP as the acyl donor. Is involved in the biosynthesis of lipid A, a phosphorylated glycolipid that anchors the lipopolysaccharide to the outer membrane of the cell. The chain is UDP-3-O-acylglucosamine N-acyltransferase from Helicobacter pylori (strain J99 / ATCC 700824) (Campylobacter pylori J99).